Consider the following 660-residue polypeptide: Bifunctional polymyxin resistance protein ArnA (660 aa).

The segment at 1–304 (MKAVIFAYHD…TLGLVAGARL (304 aa)) is formyltransferase ArnAFT. The Proton donor; for formyltransferase activity role is filled by histidine 104. Residues arginine 114 and 136-140 (VKRAD) contribute to the (6R)-10-formyltetrahydrofolate site. The segment at 314 to 660 (RRIRVLILGV…RSVDVAERAS (347 aa)) is dehydrogenase ArnADH. Residues aspartate 347 and 368-369 (DI) contribute to the NAD(+) site. UDP-alpha-D-glucuronate-binding positions include alanine 393, tyrosine 398, and 432 to 433 (TS). Glutamate 434 (proton acceptor; for decarboxylase activity) is an active-site residue. UDP-alpha-D-glucuronate contacts are provided by residues arginine 460, asparagine 492, 526–535 (KLIDGGQQKR), and tyrosine 613. Arginine 619 acts as the Proton donor; for decarboxylase activity in catalysis.

It in the N-terminal section; belongs to the Fmt family. UDP-L-Ara4N formyltransferase subfamily. The protein in the C-terminal section; belongs to the NAD(P)-dependent epimerase/dehydratase family. UDP-glucuronic acid decarboxylase subfamily. As to quaternary structure, homohexamer, formed by a dimer of trimers.

It carries out the reaction UDP-alpha-D-glucuronate + NAD(+) = UDP-beta-L-threo-pentopyranos-4-ulose + CO2 + NADH. The catalysed reaction is UDP-4-amino-4-deoxy-beta-L-arabinose + (6R)-10-formyltetrahydrofolate = UDP-4-deoxy-4-formamido-beta-L-arabinose + (6S)-5,6,7,8-tetrahydrofolate + H(+). It participates in nucleotide-sugar biosynthesis; UDP-4-deoxy-4-formamido-beta-L-arabinose biosynthesis; UDP-4-deoxy-4-formamido-beta-L-arabinose from UDP-alpha-D-glucuronate: step 1/3. Its pathway is nucleotide-sugar biosynthesis; UDP-4-deoxy-4-formamido-beta-L-arabinose biosynthesis; UDP-4-deoxy-4-formamido-beta-L-arabinose from UDP-alpha-D-glucuronate: step 3/3. It functions in the pathway bacterial outer membrane biogenesis; lipopolysaccharide biosynthesis. Bifunctional enzyme that catalyzes the oxidative decarboxylation of UDP-glucuronic acid (UDP-GlcUA) to UDP-4-keto-arabinose (UDP-Ara4O) and the addition of a formyl group to UDP-4-amino-4-deoxy-L-arabinose (UDP-L-Ara4N) to form UDP-L-4-formamido-arabinose (UDP-L-Ara4FN). The modified arabinose is attached to lipid A and is required for resistance to polymyxin and cationic antimicrobial peptides. This is Bifunctional polymyxin resistance protein ArnA from Salmonella dublin (strain CT_02021853).